Here is a 337-residue protein sequence, read N- to C-terminus: MPPTVNMGIPGASRTALGSVAGDVTGKRVLLAEPRGYCAGVDRAVETVERALEKHGAPIYVRHEIVHNRYVVDTLAKAGAIFVEQTDEVPEGAIVVFSAHGVAPTVHEEAAARHLRTIDATCPLVTKVHNEAKRFARDDYDILLVGHEGHEEVVGTAGEAPDHVQVVDNPDAVDKVTVRDPNKVIWLSQTTLSVDETMETVRRLREKFPTLQDPPSDDICYATQNRQVAVKAMAPECELVIVVGSKNSSNSVRLVEVALGAGASAAHLVDYADDIDPAWFDGVTTVGVTSGASVPEILVRGVLDRLAEHGYDVVQPVTTANETLVFALPREIRPARQ.

Cys38 is a binding site for [4Fe-4S] cluster. (2E)-4-hydroxy-3-methylbut-2-enyl diphosphate-binding residues include His67 and His100. The dimethylallyl diphosphate site is built by His67 and His100. Isopentenyl diphosphate is bound by residues His67 and His100. Cys122 contributes to the [4Fe-4S] cluster binding site. (2E)-4-hydroxy-3-methylbut-2-enyl diphosphate is bound at residue His150. Position 150 (His150) interacts with dimethylallyl diphosphate. His150 contacts isopentenyl diphosphate. The active-site Proton donor is Glu152. Thr190 provides a ligand contact to (2E)-4-hydroxy-3-methylbut-2-enyl diphosphate. Cys220 lines the [4Fe-4S] cluster pocket. (2E)-4-hydroxy-3-methylbut-2-enyl diphosphate-binding residues include Ser248, Ser249, Asn250, and Ser293. Dimethylallyl diphosphate-binding residues include Ser248, Ser249, Asn250, and Ser293. Isopentenyl diphosphate-binding residues include Ser248, Ser249, Asn250, and Ser293.

Belongs to the IspH family. The cofactor is [4Fe-4S] cluster.

It catalyses the reaction isopentenyl diphosphate + 2 oxidized [2Fe-2S]-[ferredoxin] + H2O = (2E)-4-hydroxy-3-methylbut-2-enyl diphosphate + 2 reduced [2Fe-2S]-[ferredoxin] + 2 H(+). It carries out the reaction dimethylallyl diphosphate + 2 oxidized [2Fe-2S]-[ferredoxin] + H2O = (2E)-4-hydroxy-3-methylbut-2-enyl diphosphate + 2 reduced [2Fe-2S]-[ferredoxin] + 2 H(+). It participates in isoprenoid biosynthesis; dimethylallyl diphosphate biosynthesis; dimethylallyl diphosphate from (2E)-4-hydroxy-3-methylbutenyl diphosphate: step 1/1. Its pathway is isoprenoid biosynthesis; isopentenyl diphosphate biosynthesis via DXP pathway; isopentenyl diphosphate from 1-deoxy-D-xylulose 5-phosphate: step 6/6. Its function is as follows. Catalyzes the conversion of 1-hydroxy-2-methyl-2-(E)-butenyl 4-diphosphate (HMBPP) into a mixture of isopentenyl diphosphate (IPP) and dimethylallyl diphosphate (DMAPP). Acts in the terminal step of the DOXP/MEP pathway for isoprenoid precursor biosynthesis. The chain is 4-hydroxy-3-methylbut-2-enyl diphosphate reductase from Mycolicibacterium vanbaalenii (strain DSM 7251 / JCM 13017 / BCRC 16820 / KCTC 9966 / NRRL B-24157 / PYR-1) (Mycobacterium vanbaalenii).